The primary structure comprises 513 residues: Calcium-dependent protein kinase 2 (513 aa).

The Protein kinase domain maps to 65-323 (YSFGKELGRG…SAQVLQHQWL (259 aa)). ATP is bound by residues 71-79 (LGRGQFGVT) and Lys-94. Asp-189 functions as the Proton acceptor in the catalytic mechanism. An autoinhibitory domain region spans residues 329 to 359 (ASDKPIDSAVLSRMKQFRAMNKLKKMALKVI). 4 consecutive EF-hand domains span residues 366-401 (EEIK…LGSK), 402-437 (LSEA…RHKL), 438-473 (ERDE…HEMG), and 478-508 (IREI…GMQQ). Ca(2+)-binding residues include Asp-379, Asp-381, Ser-383, Thr-385, Glu-390, Asp-415, Asp-417, Asn-419, Ser-421, Glu-426, Asp-451, Asp-453, Ser-455, Glu-462, Asp-486, Asp-488, Asp-490, Arg-492, and Glu-497.

It belongs to the protein kinase superfamily. Ser/Thr protein kinase family. CDPK subfamily.

It catalyses the reaction L-seryl-[protein] + ATP = O-phospho-L-seryl-[protein] + ADP + H(+). The enzyme catalyses L-threonyl-[protein] + ATP = O-phospho-L-threonyl-[protein] + ADP + H(+). Activated by calcium. Autophosphorylation may play an important role in the regulation of the kinase activity. Its function is as follows. May play a role in signal transduction pathways that involve calcium as a second messenger. This is Calcium-dependent protein kinase 2 (CPK2) from Zea mays (Maize).